Consider the following 95-residue polypeptide: Putative small ubiquitin-related modifier 7 (95 aa).

The 78-residue stretch at Ser-13–Gly-90 folds into the Ubiquitin-like domain. Gly-90 is covalently cross-linked (Glycyl lysine isopeptide (Gly-Lys) (interchain with K-? in acceptor proteins)).

Belongs to the ubiquitin family. SUMO subfamily. Interacts with SAE2, SCE1, SIZ1 and MMS21 Covalently attached to a number of proteins.

It localises to the nucleus. The protein resides in the cytoplasm. Functionally, ubiquitin-like protein which can be covalently attached to target lysines as a monomer. Does not seem to be involved in protein degradation and may function as an antagonist of ubiquitin in the degradation process. This Arabidopsis thaliana (Mouse-ear cress) protein is Putative small ubiquitin-related modifier 7 (SUMO7).